The following is a 313-amino-acid chain: GTP cyclohydrolase 1 (313 aa).

The span at M1–S10 shows a compositional bias: basic and acidic residues. A disordered region spans residues M1 to E120. A compositionally biased stretch (low complexity) spans D11 to P20. The span at K29–H39 shows a compositional bias: basic residues. Residues S40 to S64 show a composition bias toward basic and acidic residues. Residues T72–I102 show a composition bias toward low complexity. Zn(2+) contacts are provided by C202, H205, and C273.

Belongs to the GTP cyclohydrolase I family. As to quaternary structure, toroid-shaped homodecamer, composed of two pentamers of five dimers.

The catalysed reaction is GTP + H2O = 7,8-dihydroneopterin 3'-triphosphate + formate + H(+). It functions in the pathway cofactor biosynthesis; 7,8-dihydroneopterin triphosphate biosynthesis; 7,8-dihydroneopterin triphosphate from GTP: step 1/1. With respect to regulation, GTP shows a positive allosteric effect, and tetrahydrobiopterin inhibits the enzyme activity. Its function is as follows. GTP cyclohydrolase 1 is the first enzyme in the biosynthetic pathway leading to folic acid. This Neurospora crassa (strain ATCC 24698 / 74-OR23-1A / CBS 708.71 / DSM 1257 / FGSC 987) protein is GTP cyclohydrolase 1 (gch-1).